A 362-amino-acid polypeptide reads, in one-letter code: MVTSVAPRVESLSSSGIQSIPKEYIRPQEELTSIGNVFEEEKKDEGPQVPTIDLKDIESEDEVVRREIRERCREELKKAAMEWGVMHLVNHGISDDLINRVKVAGETFFNLPMEEKEKYANDQASGKIAGYGSKLANNASGQLEWEDYFFHLIFPEDKRDMTIWPKTPSDYVPATCEYSVKLRSLATKILSVLSLGLGLEEGRLEKEVGGMEELLLQKKINYYPKCPQPELALGVEAHTDVSALTFILHNMVPGLQLFYEGKWVTAKCVPNSIIMHIGDTIEILSNGKYKSILHRGLVNKEKVRISWAVFCEPPKEKIILKAHCQRRCLRLSHHSSHLAPFPNIFSTSSSGRPRRLYSPNEL.

The Fe2OG dioxygenase domain maps to 211-313; it reads MEELLLQKKI…RISWAVFCEP (103 aa). Fe cation is bound by residues His-238, Asp-240, and His-294.

This sequence belongs to the iron/ascorbate-dependent oxidoreductase family. Fe cation is required as a cofactor. Requires L-ascorbate as cofactor.

It catalyses the reaction a (2R,3S,4S)-leucoanthocyanidin + 2-oxoglutarate + O2 = a 4-H-anthocyanidin with a 3-hydroxy group + succinate + CO2 + 2 H2O. The protein operates within pigment biosynthesis; anthocyanin biosynthesis. Its function is as follows. Oxidation of leucoanthocyanidins into anthocyanidins. This Vitis vinifera (Grape) protein is Leucoanthocyanidin dioxygenase.